A 143-amino-acid chain; its full sequence is Transcriptional regulator MraZ (143 aa).

2 SpoVT-AbrB domains span residues 5 to 47 (TYTP…PKEE) and 76 to 119 (ADEQ…DAQA).

Belongs to the MraZ family. As to quaternary structure, forms oligomers.

It is found in the cytoplasm. The protein localises to the nucleoid. This chain is Transcriptional regulator MraZ, found in Corynebacterium glutamicum (strain R).